A 37-amino-acid polypeptide reads, in one-letter code: Large ribosomal subunit protein bL36 (37 aa).

The protein belongs to the bacterial ribosomal protein bL36 family.

In Beutenbergia cavernae (strain ATCC BAA-8 / DSM 12333 / CCUG 43141 / JCM 11478 / NBRC 16432 / NCIMB 13614 / HKI 0122), this protein is Large ribosomal subunit protein bL36.